The primary structure comprises 245 residues: MRVGVLGAKGKVGATMVRAVAAADDLTLSAELDAGDPLSLLTDGNTEVVIDFTHPDVVMGNLEFLIDNGIHAVVGTTGFTAERFQQVESWLVAKPNTSVLIAPNFAIGAVLSMHFAKQAARFFDSAEVIELHHPHKADAPSGTAARTAKLIAEARKGLPPNPDATSTSLPGARGADVDGIPVHAVRLAGLVAHQEVLFGTEGETLTIRHDSLDRTSFVPGVLLAVRRIAERPGLTVGLEPLLDLH.

NAD(+)-binding positions include 7 to 12 (GAKGKV), 75 to 77 (GTT), and 102 to 105 (APNF). The active-site Proton donor/acceptor is the H132. H133 contributes to the (S)-2,3,4,5-tetrahydrodipicolinate binding site. Residue K136 is the Proton donor of the active site. A (S)-2,3,4,5-tetrahydrodipicolinate-binding site is contributed by 142–143 (GT).

The protein belongs to the DapB family.

Its subcellular location is the cytoplasm. The enzyme catalyses (S)-2,3,4,5-tetrahydrodipicolinate + NAD(+) + H2O = (2S,4S)-4-hydroxy-2,3,4,5-tetrahydrodipicolinate + NADH + H(+). The catalysed reaction is (S)-2,3,4,5-tetrahydrodipicolinate + NADP(+) + H2O = (2S,4S)-4-hydroxy-2,3,4,5-tetrahydrodipicolinate + NADPH + H(+). It participates in amino-acid biosynthesis; L-lysine biosynthesis via DAP pathway; (S)-tetrahydrodipicolinate from L-aspartate: step 4/4. Catalyzes the conversion of 4-hydroxy-tetrahydrodipicolinate (HTPA) to tetrahydrodipicolinate. The sequence is that of 4-hydroxy-tetrahydrodipicolinate reductase from Mycobacterium tuberculosis (strain ATCC 25177 / H37Ra).